The primary structure comprises 422 residues: Adenylosuccinate synthetase (422 aa).

GTP-binding positions include 11–17 (GDEGKGK) and 39–41 (GHT). Asp-12 functions as the Proton acceptor in the catalytic mechanism. Asp-12 and Gly-39 together coordinate Mg(2+). Residues 12-15 (DEGK), 37-40 (NAGH), Thr-129, Arg-143, Asn-220, Thr-235, and Arg-299 contribute to the IMP site. His-40 serves as the catalytic Proton donor. Residue 295–301 (VTTGRKR) participates in substrate binding. Residues Arg-301, 327 to 329 (KLD), and 410 to 412 (GTG) each bind GTP.

Belongs to the adenylosuccinate synthetase family. Homodimer. The cofactor is Mg(2+).

The protein localises to the cytoplasm. The catalysed reaction is IMP + L-aspartate + GTP = N(6)-(1,2-dicarboxyethyl)-AMP + GDP + phosphate + 2 H(+). Its pathway is purine metabolism; AMP biosynthesis via de novo pathway; AMP from IMP: step 1/2. In terms of biological role, plays an important role in the de novo pathway and in the salvage pathway of purine nucleotide biosynthesis. Catalyzes the first committed step in the biosynthesis of AMP from IMP. The protein is Adenylosuccinate synthetase of Arthroderma otae (strain ATCC MYA-4605 / CBS 113480) (Microsporum canis).